The following is a 394-amino-acid chain: GTPase Obg (394 aa).

Positions 4–162 (SNFVDYVKIY…LMVILELKLL (159 aa)) constitute an Obg domain. The OBG-type G domain occupies 163-329 (ADVGLVGFPN…LKDILWTELN (167 aa)). Residues 169–176 (GFPNAGKS), 194–198 (FTTLE), 216–219 (DIPG), 283–286 (TKSD), and 310–312 (SSV) each bind GTP. Mg(2+) contacts are provided by serine 176 and threonine 196. A disordered region spans residues 358 to 394 (KDMGEDEDFEYEYEEDADDDFDYEYEDENWDEEEEKK). The span at 361–394 (GEDEDFEYEYEEDADDDFDYEYEDENWDEEEEKK) shows a compositional bias: acidic residues.

It belongs to the TRAFAC class OBG-HflX-like GTPase superfamily. OBG GTPase family. As to quaternary structure, monomer. Requires Mg(2+) as cofactor.

Its subcellular location is the cytoplasm. An essential GTPase which binds GTP, GDP and possibly (p)ppGpp with moderate affinity, with high nucleotide exchange rates and a fairly low GTP hydrolysis rate. Plays a role in control of the cell cycle, stress response, ribosome biogenesis and in those bacteria that undergo differentiation, in morphogenesis control. In Phocaeicola vulgatus (strain ATCC 8482 / DSM 1447 / JCM 5826 / CCUG 4940 / NBRC 14291 / NCTC 11154) (Bacteroides vulgatus), this protein is GTPase Obg.